A 359-amino-acid chain; its full sequence is Peptide chain release factor 1 (359 aa).

The residue at position 236 (Q236) is an N5-methylglutamine.

Belongs to the prokaryotic/mitochondrial release factor family. Methylated by PrmC. Methylation increases the termination efficiency of RF1.

It is found in the cytoplasm. In terms of biological role, peptide chain release factor 1 directs the termination of translation in response to the peptide chain termination codons UAG and UAA. The sequence is that of Peptide chain release factor 1 from Streptococcus thermophilus (strain ATCC BAA-250 / LMG 18311).